Consider the following 395-residue polypeptide: Putative 8-amino-7-oxononanoate synthase (395 aa).

R23 provides a ligand contact to substrate. 110–111 (GY) is a pyridoxal 5'-phosphate binding site. Residue H135 coordinates substrate. Residues S182, 207–210 (DEAH), and 239–242 (TFSK) contribute to the pyridoxal 5'-phosphate site. K242 carries the N6-(pyridoxal phosphate)lysine modification. T356 serves as a coordination point for substrate.

Belongs to the class-II pyridoxal-phosphate-dependent aminotransferase family. BioF subfamily. Homodimer. The cofactor is pyridoxal 5'-phosphate.

The enzyme catalyses 6-carboxyhexanoyl-[ACP] + L-alanine + H(+) = (8S)-8-amino-7-oxononanoate + holo-[ACP] + CO2. The protein operates within cofactor biosynthesis; biotin biosynthesis. In terms of biological role, catalyzes the decarboxylative condensation of pimeloyl-[acyl-carrier protein] and L-alanine to produce 8-amino-7-oxononanoate (AON), [acyl-carrier protein], and carbon dioxide. This is Putative 8-amino-7-oxononanoate synthase (bioF) from Bacillus mycoides (strain KBAB4) (Bacillus weihenstephanensis).